The chain runs to 112 residues: DNA-binding protein TSIB_0525 (112 aa).

The protein belongs to the PDCD5 family.

The chain is DNA-binding protein TSIB_0525 from Thermococcus sibiricus (strain DSM 12597 / MM 739).